We begin with the raw amino-acid sequence, 323 residues long: tRNA U34 carboxymethyltransferase (323 aa).

Residues Lys-91, Trp-105, Lys-110, Gly-130, 181–182 (IE), Met-196, Tyr-200, and Arg-315 each bind carboxy-S-adenosyl-L-methionine.

The protein belongs to the class I-like SAM-binding methyltransferase superfamily. CmoB family. Homotetramer.

The catalysed reaction is carboxy-S-adenosyl-L-methionine + 5-hydroxyuridine(34) in tRNA = 5-carboxymethoxyuridine(34) in tRNA + S-adenosyl-L-homocysteine + H(+). In terms of biological role, catalyzes carboxymethyl transfer from carboxy-S-adenosyl-L-methionine (Cx-SAM) to 5-hydroxyuridine (ho5U) to form 5-carboxymethoxyuridine (cmo5U) at position 34 in tRNAs. This is tRNA U34 carboxymethyltransferase from Enterobacter sp. (strain 638).